A 644-amino-acid chain; its full sequence is 1-deoxy-D-xylulose-5-phosphate synthase (644 aa).

Thiamine diphosphate-binding positions include His-72 and 113–115; that span reads GHA. A Mg(2+)-binding site is contributed by Asp-144. Thiamine diphosphate is bound by residues 145–146, Asn-174, Tyr-287, and Glu-370; that span reads GA. Asn-174 contacts Mg(2+).

Belongs to the transketolase family. DXPS subfamily. As to quaternary structure, homodimer. It depends on Mg(2+) as a cofactor. Thiamine diphosphate serves as cofactor.

It carries out the reaction D-glyceraldehyde 3-phosphate + pyruvate + H(+) = 1-deoxy-D-xylulose 5-phosphate + CO2. It functions in the pathway metabolic intermediate biosynthesis; 1-deoxy-D-xylulose 5-phosphate biosynthesis; 1-deoxy-D-xylulose 5-phosphate from D-glyceraldehyde 3-phosphate and pyruvate: step 1/1. Functionally, catalyzes the acyloin condensation reaction between C atoms 2 and 3 of pyruvate and glyceraldehyde 3-phosphate to yield 1-deoxy-D-xylulose-5-phosphate (DXP). This Prochlorococcus marinus (strain MIT 9313) protein is 1-deoxy-D-xylulose-5-phosphate synthase.